Reading from the N-terminus, the 392-residue chain is O-phospho-L-seryl-tRNA:Cys-tRNA synthase (392 aa).

Pyridoxal 5'-phosphate-binding positions include 85 to 86 (AR), Asn-190, and 213 to 215 (SGH). Lys-216 is subject to N6-(pyridoxal phosphate)lysine.

This sequence belongs to the SepCysS family. As to quaternary structure, homodimer. Interacts with SepRS. Pyridoxal 5'-phosphate is required as a cofactor.

The enzyme catalyses O-phospho-L-seryl-tRNA(Cys) + hydrogen sulfide + H(+) = L-cysteinyl-tRNA(Cys) + phosphate. Converts O-phospho-L-seryl-tRNA(Cys) (Sep-tRNA(Cys)) to L-cysteinyl-tRNA(Cys) (Cys-tRNA(Cys)). The protein is O-phospho-L-seryl-tRNA:Cys-tRNA synthase of Methanoculleus marisnigri (strain ATCC 35101 / DSM 1498 / JR1).